The sequence spans 155 residues: Transcription antitermination protein NusB (155 aa).

It belongs to the NusB family.

Its function is as follows. Involved in transcription antitermination. Required for transcription of ribosomal RNA (rRNA) genes. Binds specifically to the boxA antiterminator sequence of the ribosomal RNA (rrn) operons. The protein is Transcription antitermination protein NusB of Vibrio parahaemolyticus serotype O3:K6 (strain RIMD 2210633).